A 173-amino-acid chain; its full sequence is Photosystem I assembly protein Ycf3 (173 aa).

TPR repeat units follow at residues alanine 35–proline 68, serine 72–methionine 105, and glycine 120–asparagine 153.

Belongs to the Ycf3 family.

It localises to the cellular thylakoid membrane. Essential for the assembly of the photosystem I (PSI) complex. May act as a chaperone-like factor to guide the assembly of the PSI subunits. In Microcystis aeruginosa (strain NIES-843 / IAM M-2473), this protein is Photosystem I assembly protein Ycf3.